The chain runs to 400 residues: UDP-glucuronate:glycolipid 2-beta-glucuronosyltransferase (400 aa).

The Proton acceptor role is filled by aspartate 157. UDP-alpha-D-glucuronate-binding positions include 230–231 (SM), 272–273 (EM), tyrosine 292, and 306–310 (MKLLQ). The interval 377–400 (PETRLYPHPPTAAPQLSSEAALSH) is disordered. Positions 390–400 (PQLSSEAALSH) are enriched in polar residues.

It belongs to the glycosyltransferase 70 family.

It is found in the cell inner membrane. It catalyses the reaction alpha-D-Man-(1-&gt;3)-beta-D-Glc-(1-&gt;4)-alpha-D-Glc-1-di-trans,octa-cis-undecaprenyl diphosphate + UDP-alpha-D-glucuronate = beta-D-GlcA-(1-&gt;2)-alpha-D-Man-(1-&gt;3)-beta-D-Glc-(1-&gt;4)-alpha-D-Glc-di-trans,octa-cis-undecaprenyl diphosphate + UDP + H(+). It functions in the pathway glycan biosynthesis; xanthan biosynthesis. In terms of biological role, catalyzes the transfer of a glucuronic acid (GlcA) residue from UDP-glucuronate to mannose-alpha-1,3-glucose-beta-1,4-glucose-P-P-polyisoprenyl to form the lipid-linked tetrasaccharide GlcA-Man-Glc(2)-PP-Pol, with a glucuronic acid-beta-mannose linkage. Is involved in the biosynthesis of the exopolysaccharide xanthan, since it catalyzes the fourth glycosylation step in the assembly of the pentasaccharide-P-P-polyisoprenyl repeating unit of xanthan. Is unable to use the trisaccharide acceptor freed from the pyrophosphate lipid moiety. Does not show specificity for the lipidic portion of the acceptor. Shows diminished activity when tested with 6-O-acetyl-mannose-alpha-1,3-glucose-beta-1,4-glucose-P-P-polyisoprenyl, a putative intermediate in the synthesis of xanthan; this could indicate that acetylation of the internal mannose takes place after the formation of the GumK product. This is UDP-glucuronate:glycolipid 2-beta-glucuronosyltransferase (gumK) from Xanthomonas campestris pv. campestris.